A 1037-amino-acid polypeptide reads, in one-letter code: Tyrosine-protein kinase-like otk (1037 aa).

An N-terminal signal peptide occupies residues 1–23 (MDMDVMMISMCILASTFMAPGWA). 5 consecutive Ig-like C2-type domains span residues 24-109 (STSG…REAS), 110-199 (PPAK…RVMS), 251-365 (PEDL…APLN), 368-464 (PGLL…VSIN), and 469-559 (PKFS…VQLV). At 24-582 (STSGFLRVPQ…GGDGFLVTRA (559 aa)) the chain is on the extracellular side. 5 disulfides stabilise this stretch: C47-C96, C138-C188, C276-C354, C399-C448, and C491-C543. N-linked (GlcNAc...) asparagine glycosylation is found at N336, N418, N430, N445, N513, and N525. A helical membrane pass occupies residues 583-603 (VLITMTVALAYIVLVVGLMLW). At 604–1037 (CRYRRQARKA…SKAMQSVAEK (434 aa)) the chain is on the cytoplasmic side. Disordered regions lie at residues 623-683 (AGGD…KSVY) and 720-777 (SAQS…KEEE). Over residues 658–676 (KSNGDAQKSDDTACSQQSR) the composition is skewed to polar residues. A Phosphoserine modification is found at S681. Positions 693–1031 (LSELLQIGRG…QLGSALSKAM (339 aa)) constitute a Protein kinase; inactive domain. A compositionally biased stretch (basic and acidic residues) spans 723–734 (SDKDADTEKQHS). Over residues 739 to 749 (GSGGSGSGSGS) the composition is skewed to gly residues. Positions 768 to 777 (DDIEEIKEEE) are enriched in acidic residues.

This sequence belongs to the protein kinase superfamily. Tyr protein kinase family. Insulin receptor subfamily. Interacts with plexA; component of a receptor complex that mediates the repulsive signaling in response to Semaphorin ligands.

The protein localises to the cell membrane. In terms of biological role, acts as a calcium-dependent, homophilic cell adhesion molecule that regulates neural recognition during the development of the nervous system. Component of the repulsive Plexin signaling response to regulate motor axon guidance at the embryonic stage. Also component of a receptor complex that is required in the adult visual system to innervate the lamina layer; specific targeting of R1-R6 axons. The polypeptide is Tyrosine-protein kinase-like otk (Drosophila pseudoobscura pseudoobscura (Fruit fly)).